A 251-amino-acid polypeptide reads, in one-letter code: Xylose/arabinose import ATP-binding protein XylG (251 aa).

An ABC transporter domain is found at 5-241 (LEIRDVHKSF…EITEVMTSFA (237 aa)). 37 to 44 (GDNGAGKS) is a binding site for ATP.

This sequence belongs to the ABC transporter superfamily. The complex is composed of two ATP-binding proteins (XylG), two transmembrane proteins (XylH) and a solute-binding protein (XylF).

It is found in the cell membrane. The enzyme catalyses D-xylose(out) + ATP + H2O = D-xylose(in) + ADP + phosphate + H(+). The catalysed reaction is L-arabinose(out) + ATP + H2O = L-arabinose(in) + ADP + phosphate + H(+). Its function is as follows. Part of the ABC transporter complex XylFGH involved in the uptake of xylose and arabinose. Responsible for energy coupling to the transport system. This Sulfolobus acidocaldarius (strain ATCC 33909 / DSM 639 / JCM 8929 / NBRC 15157 / NCIMB 11770) protein is Xylose/arabinose import ATP-binding protein XylG.